Reading from the N-terminus, the 195-residue chain is MSLTTLGNHPKEEFALVEIATAILTEHKEAMPFSSLVQEIQEFLEVDAETFKSRLSQFYTDLNTDGSFISLGNNEWALRAWYPVDAIDESIHELDDEEDAPKRKKSAKKKVNVFADNASDDDVIDYNDDDPEDEDFGTVTDDDTETDDEETEVEVESDDESNEIDLSDDESIDANMTELSGGDDLDDLSDGDQEK.

Positions 14–81 (FALVEIATAI…GNNEWALRAW (68 aa)) constitute an HTH HARE-type domain. 2 stretches are compositionally biased toward acidic residues: residues 120-172 (DDDV…DESI) and 181-195 (GGDD…DQEK). The tract at residues 120–195 (DDDVIDYNDD…DDLSDGDQEK (76 aa)) is disordered.

It belongs to the RpoE family. RNAP is composed of a core of 2 alpha, a beta and a beta' subunits. The core is associated with a delta subunit and one of several sigma factors.

In terms of biological role, participates in both the initiation and recycling phases of transcription. In the presence of the delta subunit, RNAP displays an increased specificity of transcription, a decreased affinity for nucleic acids, and an increased efficiency of RNA synthesis because of enhanced recycling. This Leuconostoc mesenteroides subsp. mesenteroides (strain ATCC 8293 / DSM 20343 / BCRC 11652 / CCM 1803 / JCM 6124 / NCDO 523 / NBRC 100496 / NCIMB 8023 / NCTC 12954 / NRRL B-1118 / 37Y) protein is Probable DNA-directed RNA polymerase subunit delta.